The primary structure comprises 169 residues: Actin-related protein 2/3 complex subunit 4 (169 aa).

The protein belongs to the ARPC4 family. Component of the Arp2/3 complex composed of arpB/Arp2, arpC/Arp3, arcA/p41-arc, arcB/p34-arc, arcC/p21-arc, arcD/p20-arc and arcE/p16-arc. Interacts with carmil (via the region between the LRR domain and COOH-terminal proline-rich domain); carmil is required for Arp2/3-dependent actin nucleation. Arp2/3 complex, MyoB, MyoC, and the alpha and beta subunits of capping protein all form a larger complex with carmil.

It localises to the cytoplasm. Its subcellular location is the cytoskeleton. The protein resides in the cytosol. The protein localises to the cell cortex. It is found in the cell projection. It localises to the pseudopodium. In terms of biological role, functions as a component of the Arp2/3 complex which is involved in regulation of actin polymerization and together with an activating nucleation-promoting factor (NPF) mediates the formation of branched actin networks. Seems to contact the pointed end of the daughter actin filament. The Arp2/3 complex is involved in organizing the actin system in cell motility and chemotaxis, in phagocytosis and macropinocytosis, at late steps of endosome processing, and in mitosis. In concert with a group of other proteins, the Arp2/3 complex plays a general role in the rapid activation and adaptation of the actin system to its multiple functions. The sequence is that of Actin-related protein 2/3 complex subunit 4 (arcD) from Dictyostelium discoideum (Social amoeba).